A 578-amino-acid polypeptide reads, in one-letter code: Dapdiamide synthesis protein DdaD (578 aa).

In terms of domain architecture, Carrier spans 498–573 (ESISATEHQI…KMAAWLDASS (76 aa)). At Ser533 the chain carries O-(pantetheine 4'-phosphoryl)serine.

The protein belongs to the ATP-dependent AMP-binding enzyme family. It depends on pantetheine 4'-phosphate as a cofactor.

Its pathway is antibiotic biosynthesis. Functionally, involved in dapdiamide antibiotics biosynthesis. Activates and sequesters N-beta-fumaramoyl-DAP as a covalently tethered thioester for subsequent oxidative modification of the fumaramoyl group. In Enterobacter agglomerans (Erwinia herbicola), this protein is Dapdiamide synthesis protein DdaD.